The sequence spans 268 residues: Tryptophan synthase alpha chain (268 aa).

Active-site proton acceptor residues include E49 and D60.

Belongs to the TrpA family. In terms of assembly, tetramer of two alpha and two beta chains.

It catalyses the reaction (1S,2R)-1-C-(indol-3-yl)glycerol 3-phosphate + L-serine = D-glyceraldehyde 3-phosphate + L-tryptophan + H2O. Its pathway is amino-acid biosynthesis; L-tryptophan biosynthesis; L-tryptophan from chorismate: step 5/5. In terms of biological role, the alpha subunit is responsible for the aldol cleavage of indoleglycerol phosphate to indole and glyceraldehyde 3-phosphate. In Escherichia coli O6:H1 (strain CFT073 / ATCC 700928 / UPEC), this protein is Tryptophan synthase alpha chain.